The sequence spans 882 residues: Formin-like protein 9 (882 aa).

A signal peptide spans 1–19 (MGMAMRCVLVLFSVSPVLL). The interval 67–92 (SRGRRHKRYSEAPAPAPAPVPAHQAR) is disordered. A helical transmembrane segment spans residues 138-158 (IVALGVVGLCLVVLGVVIAAF). Disordered stretches follow at residues 178 to 202 (RHGS…PDPL), 293 to 316 (THDS…LSPK), and 401 to 471 (TMTN…PLPR). Positions 298-308 (SDSSYQSLSPD) are enriched in low complexity. A compositionally biased stretch (pro residues) spans 427–441 (KPAPPPPPQKNPPPN). The region spanning 462–882 (VGKDGSPLPR…QTLNLVLPLK (421 aa)) is the FH2 domain.

Belongs to the formin-like family. Class-I subfamily.

It is found in the membrane. This Oryza sativa subsp. japonica (Rice) protein is Formin-like protein 9 (FH9).